The primary structure comprises 296 residues: Remorin 4.1 (296 aa).

Disordered regions lie at residues 1 to 78, 121 to 142, and 242 to 266; these read MLTL…SGEN, TRIG…DSNP, and EKTQ…EGKR. Positions 21-39 are enriched in basic and acidic residues; it reads ASDRRDETPSSEIVVRDIH. 2 stretches are compositionally biased toward polar residues: residues 41–53 and 62–78; these read MTTT…PQQR and PSRS…SGEN. Basic and acidic residues-rich tracts occupy residues 121 to 135 and 253 to 266; these read TRIG…HGQV and RKAE…EGKR. Residues 226-261 adopt a coiled-coil conformation; that stretch reads MKKIERKLEDRRAKAMEKTQNKVAKAQRKAEERRAT.

This sequence belongs to the remorin family. Forms homodimer and heterodimer with REM4.2. Interacts with KIN11. Post-translationally, phosphorylated by KIN11. Probably ubiquitinated and degraded by the 26S proteasome pathway. As to expression, predominantly detected in bud, stem, root, flower, silique, and leaves, and enhanced dramatically in senescence leaf.

Its subcellular location is the cell membrane. Its function is as follows. Collaborates with REM4.2 to positively regulate the BCTV and BSCTV susceptibility. In Arabidopsis thaliana (Mouse-ear cress), this protein is Remorin 4.1.